Here is a 95-residue protein sequence, read N- to C-terminus: Large ribosomal subunit protein eL31 (95 aa).

This sequence belongs to the eukaryotic ribosomal protein eL31 family. Part of the 50S ribosomal subunit.

The chain is Large ribosomal subunit protein eL31 from Pyrococcus furiosus (strain ATCC 43587 / DSM 3638 / JCM 8422 / Vc1).